Here is a 377-residue protein sequence, read N- to C-terminus: Chaperone protein DnaJ (377 aa).

A J domain is found at 5–70 (DYYEILGVSR…QKRAAYDQYG (66 aa)). A CR-type zinc finger spans residues 132-210 (GVTKEIRIPT…CHGHGRIEKS (79 aa)). Cysteine 145, cysteine 148, cysteine 162, cysteine 165, cysteine 184, cysteine 187, cysteine 198, and cysteine 201 together coordinate Zn(2+). 4 CXXCXGXG motif repeats span residues 145–152 (CDVCHGSG), 162–169 (CPTCHGAG), 184–191 (CPHCHGRG), and 198–205 (CNKCHGHG).

It belongs to the DnaJ family. Homodimer. Requires Zn(2+) as cofactor.

The protein localises to the cytoplasm. In terms of biological role, participates actively in the response to hyperosmotic and heat shock by preventing the aggregation of stress-denatured proteins and by disaggregating proteins, also in an autonomous, DnaK-independent fashion. Unfolded proteins bind initially to DnaJ; upon interaction with the DnaJ-bound protein, DnaK hydrolyzes its bound ATP, resulting in the formation of a stable complex. GrpE releases ADP from DnaK; ATP binding to DnaK triggers the release of the substrate protein, thus completing the reaction cycle. Several rounds of ATP-dependent interactions between DnaJ, DnaK and GrpE are required for fully efficient folding. Also involved, together with DnaK and GrpE, in the DNA replication of plasmids through activation of initiation proteins. In Edwardsiella ictaluri (strain 93-146), this protein is Chaperone protein DnaJ.